A 532-amino-acid polypeptide reads, in one-letter code: Probable inorganic phosphate transporter 1-9 (532 aa).

At 1–22 (MPELSLLSALDAARIQWYHFKA) the chain is on the cytoplasmic side. Residues 23-43 (IIVAGMGLFTDAYDLFCIAPI) traverse the membrane as a helical segment. Over 44–62 (MKMISQIYYHKDSIGTALL) the chain is Extracellular. Residues 63–83 (STSYAIALLGTALGQLIFGYL) traverse the membrane as a helical segment. Residues 84 to 91 (GDRVGRRK) are Cytoplasmic-facing. A helical membrane pass occupies residues 92 to 112 (VYGLSLLIMVFSSFGCGFSVC). The Extracellular portion of the chain corresponds to 113 to 124 (TTRRSCVMVSLG). The helical transmembrane segment at 125–145 (FFRFVLGLGIGGDYPLSATIM) threads the bilayer. Topologically, residues 146–154 (SEFANKRTR) are cytoplasmic. Residues 155 to 175 (GAFIAAVFSMQGLGILMSSAV) traverse the membrane as a helical segment. Topologically, residues 176-207 (TMVVCLAFKNAGEGSSEKTNVAGLETLAPPES) are extracellular. The helical transmembrane segment at 208 to 228 (DIAWRLILMIGALPAALTFYW) threads the bilayer. Topologically, residues 229 to 292 (RMLMPETARY…KLFSRRFLSL (64 aa)) are cytoplasmic. Residues 293 to 313 (HGRDLFAASANWFLVDVVFYT) form a helical membrane-spanning segment. Residues 314–343 (SNLLLSQIFNFSNKPLNSTNVYDSAFEVAK) are Extracellular-facing. The helical transmembrane segment at 344–364 (LAAIVAACSTIPGYWFTVYFI) threads the bilayer. At 365 to 371 (DKIGRVK) the chain is on the cytoplasmic side. Residues 372-392 (IQMMGFFLMAVVYLVAGIPYS) form a helical membrane-spanning segment. Topologically, residues 393–406 (WYWSKHEKTNKGFM) are extracellular. A helical membrane pass occupies residues 407–427 (VLYGLIFFFSNFGPNTTTFII). Residues 428 to 441 (PAELFPARFRSTCH) lie on the Cytoplasmic side of the membrane. A helical membrane pass occupies residues 442–462 (GISGAAGKFGAIVGTVGFLWA). Residues 463–478 (TRHHEEDGFPDVKRVR) lie on the Extracellular side of the membrane. Residues 479–499 (IAFLILGGVCIAGMIVTYLFT) form a helical membrane-spanning segment. At 500–532 (RETMGRSLEENEDEIVSTSAGSSPANELLRRQY) the chain is on the cytoplasmic side. Residues 509 to 532 (ENEDEIVSTSAGSSPANELLRRQY) are disordered. Residues 515-524 (VSTSAGSSPA) show a composition bias toward polar residues.

This sequence belongs to the major facilitator superfamily. Phosphate:H(+) symporter (TC 2.A.1.9) family.

Its subcellular location is the membrane. High-affinity transporter for external inorganic phosphate. The protein is Probable inorganic phosphate transporter 1-9 (PHT1-9) of Arabidopsis thaliana (Mouse-ear cress).